The following is an 856-amino-acid chain: Envelope glycoprotein gp160 (856 aa).

The first 32 residues, 1-32 (MRVKEKYQHLWRWGWRWGTMLLGMLMICSATE), serve as a signal peptide directing secretion. At 33–684 (KLWVTVYYGV…ITNWLWYIKL (652 aa)) the chain is on the extracellular side. Cys54 and Cys74 are joined by a disulfide. N-linked (GlcNAc...) asparagine; by host glycosylation is found at Asn88, Asn136, Asn141, Asn156, Asn160, Asn186, Asn197, Asn230, Asn234, Asn241, Asn262, Asn276, Asn289, Asn295, Asn301, Asn332, Asn339, and Asn356. Intrachain disulfides connect Cys119–Cys205, Cys126–Cys196, Cys131–Cys157, Cys218–Cys247, and Cys228–Cys239. The V1 stretch occupies residues 131 to 156 (CTDLKNDTNTNSSSGRMIMEKGEIKN). A V2 region spans residues 157–196 (CSFNISTSIRGKVQKEYAFFYKLDIIPIDNDTTSYKLTSC). The interval 296 to 330 (CTRPNNNTRKRIRIQRGPGRAFVTIGKIGNMRQAH) is V3. A disulfide bond links Cys296 and Cys331. Positions 364 to 374 (SSGGDPEIVTH) are CD4-binding loop. 2 disulfide bridges follow: Cys378/Cys445 and Cys385/Cys418. A V4 region spans residues 385-418 (CNSTQLFNSTWFNSTWSTEGSNNTEGSDTITLPC). N-linked (GlcNAc...) asparagine; by host glycosylation is found at Asn386, Asn392, Asn397, Asn406, Asn448, and Asn463. V5 stretches follow at residues 461 to 471 (SNNESEIFRPG) and 463 to 471 (NESEIFRPG). The interval 512–532 (AVGIGALFLGFLGAAGSTMGA) is fusion peptide. The segment at 574 to 592 (KQLQARILAVERYLKDQQL) is immunosuppression. A disulfide bridge connects residues Cys598 and Cys604. 5 N-linked (GlcNAc...) asparagine; by host glycosylation sites follow: Asn611, Asn616, Asn624, Asn637, and Asn674. Positions 633 to 667 (REINNYTSLIHSLIEESQNQQEKNEQELLELDKWA) form a coiled coil. The interval 662-683 (ELDKWASLWNWFNITNWLWYIK) is MPER; binding to GalCer. The chain crosses the membrane as a helical span at residues 685–705 (FIMIVGGLVGLRIVFAVLSIV). Over 706-856 (NRVRQGYSPL…IRQGLERILL (151 aa)) the chain is Cytoplasmic. The YXXL motif; contains endocytosis signal signature appears at 712–715 (YSPL). A disordered region spans residues 718-742 (QTHLPTPRGPDRPEGIEEEGGERDR). 2 S-palmitoyl cysteine; by host lipidation sites follow: Cys764 and Cys837. Residues 855 to 856 (LL) carry the Di-leucine internalization motif motif.

It belongs to the HIV-1 env protein family. The mature envelope protein (Env) consists of a homotrimer of non-covalently associated gp120-gp41 heterodimers. The resulting complex protrudes from the virus surface as a spike. There seems to be as few as 10 spikes on the average virion. Interacts with host CD4, CCR5 and CXCR4. Gp120 also interacts with the C-type lectins CD209/DC-SIGN and CLEC4M/DC-SIGNR (collectively referred to as DC-SIGN(R)). Gp120 and gp41 interact with GalCer. Gp120 interacts with host ITGA4/ITGB7 complex; on CD4+ T-cells, this interaction results in rapid activation of integrin ITGAL/LFA-1, which facilitates efficient cell-to-cell spreading of HIV-1. Gp120 interacts with cell-associated heparan sulfate; this interaction increases virus infectivity on permissive cells and may be involved in infection of CD4- cells. In terms of assembly, the mature envelope protein (Env) consists of a homotrimer of non-covalently associated gp120-gp41 heterodimers. The resulting complex protrudes from the virus surface as a spike. There seems to be as few as 10 spikes on the average virion. Palmitoylation of the transmembrane protein and of Env polyprotein (prior to its proteolytic cleavage) is essential for their association with host cell membrane lipid rafts. Palmitoylation is therefore required for envelope trafficking to classical lipid rafts, but not for viral replication. Post-translationally, highly glycosylated by host. The high number of glycan on the protein is reffered to as 'glycan shield' because it contributes to hide protein sequence from adaptive immune system. In terms of processing, specific enzymatic cleavages in vivo yield mature proteins. Envelope glycoproteins are synthesized as an inactive precursor that is heavily N-glycosylated and processed likely by host cell furin in the Golgi to yield the mature SU and TM proteins. The cleavage site between SU and TM requires the minimal sequence [KR]-X-[KR]-R. About 2 of the 9 disulfide bonds of gp41 are reduced by P4HB/PDI, following binding to CD4 receptor.

It localises to the virion membrane. The protein localises to the host cell membrane. It is found in the host endosome membrane. Oligomerizes in the host endoplasmic reticulum into predominantly trimers. In a second time, gp160 transits in the host Golgi, where glycosylation is completed. The precursor is then proteolytically cleaved in the trans-Golgi and thereby activated by cellular furin or furin-like proteases to produce gp120 and gp41. In terms of biological role, attaches the virus to the host lymphoid cell by binding to the primary receptor CD4. This interaction induces a structural rearrangement creating a high affinity binding site for a chemokine coreceptor like CXCR4 and/or CCR5. Acts as a ligand for CD209/DC-SIGN and CLEC4M/DC-SIGNR, which are respectively found on dendritic cells (DCs), and on endothelial cells of liver sinusoids and lymph node sinuses. These interactions allow capture of viral particles at mucosal surfaces by these cells and subsequent transmission to permissive cells. HIV subverts the migration properties of dendritic cells to gain access to CD4+ T-cells in lymph nodes. Virus transmission to permissive T-cells occurs either in trans (without DCs infection, through viral capture and transmission), or in cis (following DCs productive infection, through the usual CD4-gp120 interaction), thereby inducing a robust infection. In trans infection, bound virions remain infectious over days and it is proposed that they are not degraded, but protected in non-lysosomal acidic organelles within the DCs close to the cell membrane thus contributing to the viral infectious potential during DCs' migration from the periphery to the lymphoid tissues. On arrival at lymphoid tissues, intact virions recycle back to DCs' cell surface allowing virus transmission to CD4+ T-cells. Its function is as follows. Acts as a class I viral fusion protein. Under the current model, the protein has at least 3 conformational states: pre-fusion native state, pre-hairpin intermediate state, and post-fusion hairpin state. During fusion of viral and target intracellular membranes, the coiled coil regions (heptad repeats) assume a trimer-of-hairpins structure, positioning the fusion peptide in close proximity to the C-terminal region of the ectodomain. The formation of this structure appears to drive apposition and subsequent fusion of viral and target cell membranes. Complete fusion occurs in host cell endosomes and is dynamin-dependent, however some lipid transfer might occur at the plasma membrane. The virus undergoes clathrin-dependent internalization long before endosomal fusion, thus minimizing the surface exposure of conserved viral epitopes during fusion and reducing the efficacy of inhibitors targeting these epitopes. Membranes fusion leads to delivery of the nucleocapsid into the cytoplasm. This Homo sapiens (Human) protein is Envelope glycoprotein gp160.